Consider the following 1066-residue polypeptide: MGTEDCDHEGRSVAAPVEVTALYATDGCVITSSLALLTNCLLGAEPLYIFSYDAYRSDAPNGPTGAPTEQERFEGSRALYRDAGGLNGDSFRVTFCLLGTEVGVTHHPKGRTRPMFVCRFERADDVAVLQDALGRGTPLLPAHVTATLDLEATFALHANIIMALTVAIVHNAPARIGSGSTAPLYEPGESMRSVVGRMSLGQRGLTTLFVHHEARVLGAYRRAYYGSAQSPFWFLSKFGPDEKSLVLAARYYLLQAPRLGGAGATYDLQAVKDICATYAIPHDPRPDTLSAASLTSFAAITRFCCTSQYSRGAAAAGFPLYVERRIAADVRETGALEKFIAHDRSCLRVSDREFITYIYLAHFECFSPPRLATHLRAVTTHDPSPAASTEQPSPLGREAVEQFFRHVRAQLNIREYVKQNVTPRETALAGDAAAAYLRARTYAPAALTPAPAYCGVADSSTKMMGRLAEAERLLVPHGWPAFAPTTPGDDAGGGTAAPQTCGIVKRLLKLAATEQQGTTPPAIAALMQDASVQTPLPVYRITMSPTGQAFAAAARDDWARVTRDARPPEATVVADAAAAPEPGALGRRLTRRICARGPALPPGGLAVGGQMYVNRNEIFNAALAVTNIILDLDIALKEPVPFPRLHEALGHFRRGALAAVQLLFPAARVDPDAYPCYFFKSACRPRAPPVCAGDGPSAGGDDGDGDWFPDAGGPGDEEWEEDTDPMDTTHGPLPDDEAAYLDLLHEQIPAATPSEPDSVVCSCADKIGLRVCLPVPAPYVVHGSLTMRGVARVIQQAVLLDRDFVEAVGSHVKNFLLIDTGVYAHGHSLRLPYFAKIGPDGSACGRLLPVFVIPPACEDVPAFVAAHADPRRFHFHAPPMFSAAPREIRVLHSLGGDYVSFFEKKASRNALEHFGRRETLTEVLGRYDVRPDAGETVEGFASELLGRIVACIEAHFPEHAREYQAVSVRRAVIKDDWVLLQLIPGRGALNQSLSCLRFKHGRASRATARTFLALSVGTNNRLCASLCQQCFATKCDNNRLHTLFTVDAGTPCSRSAPSSTSRPSSS.

The interval 694 to 727 is disordered; sequence DGPSAGGDDGDGDWFPDAGGPGDEEWEEDTDPMD. The span at 715–725 shows a compositional bias: acidic residues; sequence GDEEWEEDTDP. The CHC2-type zinc finger occupies 995–1035; it reads CLRFKHGRASRATARTFLALSVGTNNRLCASLCQQCFATKC.

Belongs to the herpesviridae DNA primase family. As to quaternary structure, associates with the helicase and the primase-associated factor to form the helicase-primase factor.

Its subcellular location is the host nucleus. Functionally, essential component of the helicase/primase complex. Unwinds the DNA at the replication forks and generates single-stranded DNA for both leading and lagging strand synthesis. The primase initiates primer synthesis and thereby produces large amount of short RNA primers on the lagging strand that the polymerase elongates using dNTPs. The chain is DNA primase from Human herpesvirus 2 (strain HG52) (HHV-2).